The primary structure comprises 984 residues: MAAAFAYRWLLCAAGIVNVLPIGAQRHTASDNPSTYNIGGVLSNSESELHFHTTIAHLNFDQQYVPRKVTYYDKTIRMDKNPIKTVFNVCDKLIEKRVYAVVVSHEQTSGDLSPAAVSYTSGFYSIPVIGISSRDAAFSDKNIHVSFLRTVPPYYHQADVWLELLSHFLYTKVIIIHSSDTDGRAILGRFQTTSQTYYDDVDVRATVELIVEFEPKLESFTEHLIDMKTAQSRVYLMYASTEDAQVIFRDAGEYNMTGEGHVWIVTEQALHANNTPDGVLGLQLEHAHSDKGHIRDSVYVLASAIKEMISNETIAEAPKDCGDSAVNWESGKRLFQYLKSRNITGETGQVAFDDNGDRIYAGYDVINIREHQKQHLVGKFSYDSLRAKMRMRINDSEIIWGGKQKRKPEGIMIPTHLKVLTIEEKPFVYVRRMGDDEFRCEPDERPCPLFNASDATTNEFCCRGYCIDLLIELSKRINFTYDLALSPDGQFGHYILRNNTGAMTLRKEWTGLIGELVNERADMIVAPLTINPERAEYIEFSKPFKYQGITILEKKPSRSSTLVSFLQPFSNTLWILVMVSVHVVALVLYLLDRFSPFGRFKLSHSDSNEEKALNLSSAVWFAWGVLLNSGIGEGTPRSFSARVLGMVWAGFAMIIVASYTANLAAFLVLERPKTKLSGINDARLRNTMENLTCATVKGSSVDMYFRRQVELSNMYRTMESNNYVTAEQAIQDVKKGKLMAFIWDSSRLEYEASKDCELVTAGELFGRSGYGVGLQKGSPWTDAVTLTILEFHESGFMEKLDKQWIFHGHVQQNCELFEKTPNTLGLKNMAGVFILVGVGIAGGVGLIIIEVIYKKHQVKKQKRLDIARHAADKWRGTIEKRKTIRASLAMQRQYNVGLMARQPPGTISLAVDKRRYPRLGQRLGPERAWPGDAADVLRTRRPYDLTKSGLVPPALGLGKTRPQQNPLPPRYSPGYTSDVSHLVV.

The signal sequence occupies residues 1 to 24 (MAAAFAYRWLLCAAGIVNVLPIGA). Over 25-570 (QRHTASDNPS…TLVSFLQPFS (546 aa)) the chain is Extracellular. N-linked (GlcNAc...) asparagine glycosylation is found at N255, N311, N342, N394, N451, N478, and N498. Glycine contacts are provided by residues 527–529 (PLT) and R534. A helical membrane pass occupies residues 571 to 591 (NTLWILVMVSVHVVALVLYLL). The Cytoplasmic portion of the chain corresponds to 592–648 (DRFSPFGRFKLSHSDSNEEKALNLSSAVWFAWGVLLNSGIGEGTPRSFSARVLGMVW). The chain crosses the membrane as a helical span at residues 649–669 (AGFAMIIVASYTANLAAFLVL). At 670-828 (ERPKTKLSGI…KTPNTLGLKN (159 aa)) the chain is on the extracellular side. The N-linked (GlcNAc...) asparagine glycan is linked to N690. Residues S700 and D744 each contribute to the glycine site. Residues 829-849 (MAGVFILVGVGIAGGVGLIII) traverse the membrane as a helical segment. The Cytoplasmic portion of the chain corresponds to 850–984 (EVIYKKHQVK…YTSDVSHLVV (135 aa)). Residues 947 to 984 (KSGLVPPALGLGKTRPQQNPLPPRYSPGYTSDVSHLVV) form a disordered region. A compositionally biased stretch (polar residues) spans 974–984 (GYTSDVSHLVV).

It belongs to the glutamate-gated ion channel (TC 1.A.10.1) family. As to quaternary structure, forms a heteromeric NMDA channel with Nmdar2.

The protein resides in the cell membrane. The protein localises to the postsynaptic cell membrane. It is found in the postsynaptic density. Functionally, NMDA receptor subtype of glutamate-gated ion channels with high calcium permeability and voltage-dependent sensitivity to magnesium. Mediated by glycine. This protein plays a key role in synaptic plasticity, synaptogenesis, excitotoxicity, memory acquisition and learning. It mediates neuronal functions in glutamate neurotransmission. Is involved in the cell surface targeting of NMDA receptors. Plays a role in associative learning and in long-term memory consolidation. The sequence is that of Glutamate [NMDA] receptor subunit 1 from Drosophila virilis (Fruit fly).